We begin with the raw amino-acid sequence, 977 residues long: Kinesin-like protein KIN-14D (977 aa).

Over residues 1–13 the composition is skewed to low complexity; sequence MSSSNNAAAAAAS. Residues 1–20 are disordered; sequence MSSSNNAAAAAASPDPSRRR. Residues 17-118 form the Calponin-homology (CH) domain; sequence SRRREDVVGW…CILALKDRFG (102 aa). A coiled-coil region spans residues 297-384; it reads KAEETQRIED…TKRRIELEEL (88 aa). Residues 472-800 enclose the Kinesin motor domain; that stretch reads NIRVYCRIRP…LKFAERVSGV (329 aa). 556-563 serves as a coordination point for ATP; it reads GQTGSGKT. Positions 812-847 form a coiled coil; that stretch reads KEGKDVKELMDQLSLLKDTISKKDEEIDRLQLLNSS. Residues 852 to 977 form a disordered region; it reads PTRQADSVLK…RNNSTLKRGP (126 aa). Polar residues-rich tracts occupy residues 861-879 and 956-977; these read KHSS…TSVG and RKSS…KRGP.

It belongs to the TRAFAC class myosin-kinesin ATPase superfamily. Kinesin family. KIN-14 subfamily.

The chain is Kinesin-like protein KIN-14D from Oryza sativa subsp. japonica (Rice).